A 349-amino-acid polypeptide reads, in one-letter code: Isopentenyl-diphosphate delta-isomerase (349 aa).

5–6 provides a ligand contact to substrate; the sequence is RK. FMN-binding positions include Ser-62, 63–65, Ser-93, and Asn-122; that span reads AIT. 93–95 lines the substrate pocket; that stretch reads SQR. Residue Gln-151 participates in substrate binding. Glu-152 is a binding site for Mg(2+). FMN is bound by residues Lys-183, Thr-213, 259–261, and 280–281; these read GIR and AL.

The protein belongs to the IPP isomerase type 2 family. As to quaternary structure, homooctamer. Dimer of tetramers. The cofactor is FMN. NADPH serves as cofactor. Mg(2+) is required as a cofactor.

The protein localises to the cytoplasm. It catalyses the reaction isopentenyl diphosphate = dimethylallyl diphosphate. Its function is as follows. Involved in the biosynthesis of isoprenoids. Catalyzes the 1,3-allylic rearrangement of the homoallylic substrate isopentenyl (IPP) to its allylic isomer, dimethylallyl diphosphate (DMAPP). The protein is Isopentenyl-diphosphate delta-isomerase of Methanothermobacter thermautotrophicus (strain ATCC 29096 / DSM 1053 / JCM 10044 / NBRC 100330 / Delta H) (Methanobacterium thermoautotrophicum).